A 409-amino-acid polypeptide reads, in one-letter code: Peptidase T (409 aa).

Residue histidine 78 coordinates Zn(2+). Aspartate 80 is a catalytic residue. Aspartate 140 is a Zn(2+) binding site. Glutamate 173 functions as the Proton acceptor in the catalytic mechanism. Glutamate 174, aspartate 196, and histidine 379 together coordinate Zn(2+).

This sequence belongs to the peptidase M20B family. The cofactor is Zn(2+).

It localises to the cytoplasm. It catalyses the reaction Release of the N-terminal residue from a tripeptide.. Its function is as follows. Cleaves the N-terminal amino acid of tripeptides. This is Peptidase T from Escherichia coli (strain SE11).